A 373-amino-acid chain; its full sequence is Protein phosphatase 1K, mitochondrial (373 aa).

The 253-residue stretch at 95 to 347 (KVGCSTQLGK…DNSTAIVVPF (253 aa)) folds into the PPM-type phosphatase domain. Asp-128, Gly-129, and Asp-338 together coordinate Mg(2+).

This sequence belongs to the PP2C family. The cofactor is Mg(2+). Requires Mn(2+) as cofactor.

It is found in the mitochondrion matrix. It carries out the reaction O-phospho-L-seryl-[protein] + H2O = L-seryl-[protein] + phosphate. The enzyme catalyses O-phospho-L-threonyl-[protein] + H2O = L-threonyl-[protein] + phosphate. The protein is Protein phosphatase 1K, mitochondrial (ppm1k) of Xenopus laevis (African clawed frog).